The chain runs to 167 residues: Xanthine-guanine phosphoribosyltransferase (167 aa).

5-phospho-alpha-D-ribose 1-diphosphate is bound by residues 47 to 48 (RG), Gln-79, and 102 to 110 (DDLVDSGKT). Position 79 (Gln-79) interacts with GMP. Asp-103 contributes to the Mg(2+) binding site. Residues Asp-106 and Ile-149 each coordinate guanine. Residues Asp-106 and Ile-149 each coordinate xanthine. Residues 106-110 (DSGKT) and 148-149 (WI) contribute to the GMP site.

This sequence belongs to the purine/pyrimidine phosphoribosyltransferase family. XGPT subfamily. In terms of assembly, homotetramer. Mg(2+) serves as cofactor.

The protein localises to the cell inner membrane. The enzyme catalyses GMP + diphosphate = guanine + 5-phospho-alpha-D-ribose 1-diphosphate. The catalysed reaction is XMP + diphosphate = xanthine + 5-phospho-alpha-D-ribose 1-diphosphate. It catalyses the reaction IMP + diphosphate = hypoxanthine + 5-phospho-alpha-D-ribose 1-diphosphate. The protein operates within purine metabolism; GMP biosynthesis via salvage pathway; GMP from guanine: step 1/1. It participates in purine metabolism; XMP biosynthesis via salvage pathway; XMP from xanthine: step 1/1. Its function is as follows. Purine salvage pathway enzyme that catalyzes the transfer of the ribosyl-5-phosphate group from 5-phospho-alpha-D-ribose 1-diphosphate (PRPP) to the N9 position of the 6-oxopurines guanine and xanthine to form the corresponding ribonucleotides GMP (guanosine 5'-monophosphate) and XMP (xanthosine 5'-monophosphate), with the release of PPi. To a lesser extent, also acts on hypoxanthine. The polypeptide is Xanthine-guanine phosphoribosyltransferase (Cereibacter sphaeroides (strain ATCC 17029 / ATH 2.4.9) (Rhodobacter sphaeroides)).